A 230-amino-acid polypeptide reads, in one-letter code: Thymidylate kinase (230 aa).

Residue 20–27 (GGEGSGKS) coordinates ATP.

The protein belongs to the thymidylate kinase family.

It carries out the reaction dTMP + ATP = dTDP + ADP. Its function is as follows. Phosphorylation of dTMP to form dTDP in both de novo and salvage pathways of dTTP synthesis. The protein is Thymidylate kinase of Nitrobacter hamburgensis (strain DSM 10229 / NCIMB 13809 / X14).